The chain runs to 195 residues: Glycerol-3-phosphate acyltransferase 2 (195 aa).

6 consecutive transmembrane segments (helical) span residues 4–24 (VVSL…VAGV), 52–72 (GAAA…VGLA), 73–93 (LWLA…GVVF), 115–135 (AMLV…LALI), 150–170 (AIPF…SRLG), and 171–191 (GGAE…HLLA).

This sequence belongs to the PlsY family. In terms of assembly, probably interacts with PlsX.

Its subcellular location is the cell membrane. The enzyme catalyses an acyl phosphate + sn-glycerol 3-phosphate = a 1-acyl-sn-glycero-3-phosphate + phosphate. The protein operates within lipid metabolism; phospholipid metabolism. In terms of biological role, catalyzes the transfer of an acyl group from acyl-phosphate (acyl-PO(4)) to glycerol-3-phosphate (G3P) to form lysophosphatidic acid (LPA). This enzyme utilizes acyl-phosphate as fatty acyl donor, but not acyl-CoA or acyl-ACP. The sequence is that of Glycerol-3-phosphate acyltransferase 2 from Deinococcus radiodurans (strain ATCC 13939 / DSM 20539 / JCM 16871 / CCUG 27074 / LMG 4051 / NBRC 15346 / NCIMB 9279 / VKM B-1422 / R1).